The following is an 878-amino-acid chain: Coatomer subunit gamma (878 aa).

6 HEAT repeats span residues 64-101 (REAT…VAED), 287-324 (RMLS…THPA), 326-359 (VTTC…GAES), 360-396 (SVER…KYPR), 399-434 (TVLM…ENAD), and 471-508 (ATPS…SCPA).

This sequence belongs to the COPG family. Oligomeric complex that consists of at least the alpha, beta, beta', gamma, delta, epsilon and zeta subunits.

Its subcellular location is the cytoplasm. It is found in the golgi apparatus membrane. The protein localises to the cytoplasmic vesicle. The protein resides in the COPI-coated vesicle membrane. It localises to the endoplasmic reticulum. Its function is as follows. The coatomer is a cytosolic protein complex that binds to dilysine motifs and reversibly associates with Golgi non-clathrin-coated vesicles, which further mediate biosynthetic protein transport from the ER, via the Golgi up to the trans Golgi network. Coatomer complex is required for budding from Golgi membranes, and is essential for the retrograde Golgi-to-ER transport of dilysine-tagged proteins. Required for limiting lipid storage in lipid droplets. Involved in the expansion of luminal extracellular matrices and apical membrane during tubulogenesis. Required in the tracheal epithelium for luminal protein secretion and diametric tube growth. In salivary glands, required for deposition of O-glycans and luminal extracellular matrix assembly. Required for epidermal morphogenesis and cuticle development. In Drosophila pseudoobscura pseudoobscura (Fruit fly), this protein is Coatomer subunit gamma.